We begin with the raw amino-acid sequence, 294 residues long: tRNA dimethylallyltransferase (294 aa).

10-17 (GPTAVGKT) lines the ATP pocket. Substrate is bound at residue 12-17 (TAVGKT). An interaction with substrate tRNA region spans residues 35–38 (DSQQ).

It belongs to the IPP transferase family. Monomer. Mg(2+) serves as cofactor.

The enzyme catalyses adenosine(37) in tRNA + dimethylallyl diphosphate = N(6)-dimethylallyladenosine(37) in tRNA + diphosphate. Functionally, catalyzes the transfer of a dimethylallyl group onto the adenine at position 37 in tRNAs that read codons beginning with uridine, leading to the formation of N6-(dimethylallyl)adenosine (i(6)A). The protein is tRNA dimethylallyltransferase of Streptococcus pneumoniae (strain Taiwan19F-14).